A 138-amino-acid chain; its full sequence is D-ribose pyranase (138 aa).

Histidine 20 serves as the catalytic Proton donor. Substrate contacts are provided by residues aspartate 28, histidine 105, and 127–129 (YAN).

The protein belongs to the RbsD / FucU family. RbsD subfamily. As to quaternary structure, homodecamer.

It is found in the cytoplasm. It catalyses the reaction beta-D-ribopyranose = beta-D-ribofuranose. Its pathway is carbohydrate metabolism; D-ribose degradation; D-ribose 5-phosphate from beta-D-ribopyranose: step 1/2. Catalyzes the interconversion of beta-pyran and beta-furan forms of D-ribose. In Psychromonas ingrahamii (strain DSM 17664 / CCUG 51855 / 37), this protein is D-ribose pyranase.